A 213-amino-acid polypeptide reads, in one-letter code: Immunoglobulin lambda-like polypeptide 1 (213 aa).

The N-terminal stretch at 1-37 is a signal peptide; the sequence is MRPGTGQGGLEAPGEPGPNLRQRWPLLLLGLAVVTHG. Residues 97–108 form a j region region; that stretch reads VFGSGTQLTVLS. Positions 109–213 are c region; sequence QPKATPSVTL…EKTVAPAECS (105 aa). An Ig-like C1-type domain is found at 114–208; the sequence is PSVTLFPPSS…EGSTVEKTVA (95 aa). Cysteines 135 and 194 form a disulfide.

In terms of assembly, associates non-covalently with VPREB1. Interacts with SYNV1/HRD1 (via N-terminus); this interaction leads to increased IGLL1 ubiquitination and degradation in pre-B cells, possibly through a lysosomal, not proteasomal, pathway. As to expression, expressed only in pre-B-cells and a special B-cell line (which is surface Ig negative).

The protein resides in the endoplasmic reticulum. It is found in the secreted. Its function is as follows. Critical for B-cell development. The polypeptide is Immunoglobulin lambda-like polypeptide 1 (IGLL1) (Homo sapiens (Human)).